The sequence spans 278 residues: Protein D7 (278 aa).

CHHC U11-48K-type zinc fingers lie at residues 6–33 (LMQC…RENN) and 40–67 (LATC…EYRV). Positions 9, 15, 25, 29, 43, 49, 59, and 63 each coordinate Zn(2+). Residues 149 to 164 (QVKQNQPEPEPFTSSE) show a composition bias toward polar residues. Disordered stretches follow at residues 149–230 (QVKQ…PKAN) and 249–278 (PGGS…WVRK). Residues 165-175 (RNYDPRSKEPP) show a composition bias toward basic and acidic residues. A compositionally biased stretch (polar residues) spans 188-200 (ATTNTNPWCRQTG). Residues 214–225 (SSDEGPRNKEFP) show a composition bias toward basic and acidic residues.

It belongs to the UPF0224 (FAM112) family.

It localises to the cytoplasm. Its function is as follows. Involved in oocyte maturation. It is possible that D7 is required at a certain point in the maturation process and that maturation cannot proceed beyond this point unless a threshold amount of D7 protein is provided. The polypeptide is Protein D7 (d7) (Xenopus laevis (African clawed frog)).